A 410-amino-acid polypeptide reads, in one-letter code: Peptidase T (410 aa).

Position 77 (H77) interacts with Zn(2+). The active site involves D79. D140 contacts Zn(2+). The active-site Proton acceptor is the E174. The Zn(2+) site is built by E175, D197, and H379.

It belongs to the peptidase M20B family. It depends on Zn(2+) as a cofactor.

The protein localises to the cytoplasm. It carries out the reaction Release of the N-terminal residue from a tripeptide.. Cleaves the N-terminal amino acid of tripeptides. This Desulfitobacterium hafniense (strain Y51) protein is Peptidase T.